The sequence spans 362 residues: Phosphoserine aminotransferase (362 aa).

Ser-9 and Arg-42 together coordinate L-glutamate. Residues 76 to 77, Trp-102, Thr-153, Asp-174, and Gln-197 each bind pyridoxal 5'-phosphate; that span reads GR. Residue Lys-198 is modified to N6-(pyridoxal phosphate)lysine. 239–240 is a pyridoxal 5'-phosphate binding site; it reads NT.

This sequence belongs to the class-V pyridoxal-phosphate-dependent aminotransferase family. SerC subfamily. In terms of assembly, homodimer. Requires pyridoxal 5'-phosphate as cofactor.

Its subcellular location is the cytoplasm. It catalyses the reaction O-phospho-L-serine + 2-oxoglutarate = 3-phosphooxypyruvate + L-glutamate. The enzyme catalyses 4-(phosphooxy)-L-threonine + 2-oxoglutarate = (R)-3-hydroxy-2-oxo-4-phosphooxybutanoate + L-glutamate. The protein operates within amino-acid biosynthesis; L-serine biosynthesis; L-serine from 3-phospho-D-glycerate: step 2/3. It functions in the pathway cofactor biosynthesis; pyridoxine 5'-phosphate biosynthesis; pyridoxine 5'-phosphate from D-erythrose 4-phosphate: step 3/5. Catalyzes the reversible conversion of 3-phosphohydroxypyruvate to phosphoserine and of 3-hydroxy-2-oxo-4-phosphonooxybutanoate to phosphohydroxythreonine. This Escherichia coli O127:H6 (strain E2348/69 / EPEC) protein is Phosphoserine aminotransferase.